The sequence spans 168 residues: Ribosome maturation factor RimM (168 aa).

Residues 94-167 (DGNYYHHQII…KVIIELLDGL (74 aa)) form the PRC barrel domain.

Belongs to the RimM family. As to quaternary structure, binds ribosomal protein uS19.

Its subcellular location is the cytoplasm. An accessory protein needed during the final step in the assembly of 30S ribosomal subunit, possibly for assembly of the head region. Essential for efficient processing of 16S rRNA. May be needed both before and after RbfA during the maturation of 16S rRNA. It has affinity for free ribosomal 30S subunits but not for 70S ribosomes. The polypeptide is Ribosome maturation factor RimM (Ligilactobacillus salivarius (strain UCC118) (Lactobacillus salivarius)).